The sequence spans 356 residues: Glucose-1-phosphate thymidylyltransferase (356 aa).

Positions 107 and 221 each coordinate Mg(2+).

Belongs to the glucose-1-phosphate thymidylyltransferase family. Mg(2+) is required as a cofactor.

The catalysed reaction is dTTP + alpha-D-glucose 1-phosphate + H(+) = dTDP-alpha-D-glucose + diphosphate. Its pathway is antibiotic biosynthesis. Functionally, involved in the biosynthesis of the two 2,6-deoxysugars, dTDP-L-oleandrose and dTDP-D-desosamine, attached to the macrolactone ring oleandolide to produce the aglycone antibiotic oleandomycin. Catalyzes the formation of dTDP-glucose from deoxythymidine triphosphate (dTTP) and glucose 1-phosphate. This is Glucose-1-phosphate thymidylyltransferase from Streptomyces antibioticus.